The following is a 162-amino-acid chain: Phosphopantetheine adenylyltransferase (162 aa).

Residue Thr-14 participates in substrate binding. ATP contacts are provided by residues 14–15 (TF) and His-22. Substrate contacts are provided by Lys-46, Leu-78, and Arg-92. ATP is bound by residues 93 to 95 (GLR), Glu-103, and 128 to 134 (HSFISSS).

This sequence belongs to the bacterial CoaD family. As to quaternary structure, homohexamer. The cofactor is Mg(2+).

It localises to the cytoplasm. The catalysed reaction is (R)-4'-phosphopantetheine + ATP + H(+) = 3'-dephospho-CoA + diphosphate. It functions in the pathway cofactor biosynthesis; coenzyme A biosynthesis; CoA from (R)-pantothenate: step 4/5. Reversibly transfers an adenylyl group from ATP to 4'-phosphopantetheine, yielding dephospho-CoA (dPCoA) and pyrophosphate. This Xylella fastidiosa (strain M23) protein is Phosphopantetheine adenylyltransferase.